Reading from the N-terminus, the 297-residue chain is Small ribosomal subunit protein uS2 (297 aa).

A compositionally biased stretch (low complexity) spans 263-289 (AAPTSWEADGGDWAASSAAPAGESWAE). A disordered region spans residues 263–297 (AAPTSWEADGGDWAASSAAPAGESWAETQPAEAKW).

The protein belongs to the universal ribosomal protein uS2 family. Component of the small ribosomal subunit. Mature ribosomes consist of a small (40S) and a large (60S) subunit. The 40S subunit contains about 33 different proteins and 1 molecule of RNA (18S). The 60S subunit contains about 49 different proteins and 3 molecules of RNA (25S, 5.8S and 5S). Interacts with rps21.

The protein localises to the cytoplasm. Its function is as follows. Required for the assembly and/or stability of the 40S ribosomal subunit. Required for the processing of the 20S rRNA-precursor to mature 18S rRNA in a late step of the maturation of 40S ribosomal subunits. In Neosartorya fischeri (strain ATCC 1020 / DSM 3700 / CBS 544.65 / FGSC A1164 / JCM 1740 / NRRL 181 / WB 181) (Aspergillus fischerianus), this protein is Small ribosomal subunit protein uS2 (rps0).